The sequence spans 738 residues: Nucleoprotein (738 aa).

Residues 334–363 are a coiled coil; sequence VNVGEQYQQLREAATEAEKQLQQYAETREL. Residues 418–640 are disordered; that stretch reads GDRYPDDNDI…QGSESEALPI (223 aa). A compositionally biased stretch (acidic residues) spans 461-476; it reads PYDDESNNYPDYEDSA. The span at 544–564 shows a compositional bias: polar residues; the sequence is PGSNTNQPQGNMSSTLQSMTP. The span at 567-594 shows a compositional bias: acidic residues; the sequence is EESEPDDQKDDDDESLTSLDSEGDEDVE. Residues 616 to 625 show a composition bias toward polar residues; the sequence is VDTNQQNGPS.

It belongs to the filoviruses nucleoprotein family. Homooligomer. Homomultimerizes to form the nucleocapsid. Binds to viral genomic RNA. Interacts with VP35 and VP30 to form the nucleocapsid. Interacts with host PPP2R5C; this interaction leads to VP30 dephosphorylation and viral transcription. Interacts with VP24; this interaction facilitates nucleocapsid assembly and genome packaging. Interacts with matrix protein VP40; this interaction allows recruitment of the nucleocapsid into progeny virions. Interacts with host STAU1. Interacts with host NXF1 (via RNA-binding domain); this interaction recruits NXF1 to the inclusion bodies were viral replication takes place, probably to export viral mRNA-NXF1 complexes from these sites. Interacts with host CCDC92; this interaction sequesters NP in the host cytoplasm. Interacts with host TRIM14. Phosphorylated and O-glycosylated by host. Acetylated by host EP300 in vitro.

Its subcellular location is the virion. It localises to the host cytoplasm. Oligomerizes into helical capsid to encapsidate the viral genome, protecting it from nucleases and the cellular innate immune response. VP35 binds to and stabilizes monomeric NP, keeping it soluble. Upon virus replication, NP is recruited to bind cooperatively viral genomic RNA and VP35 is released. The encapsidated genomic RNA is termed the nucleocapsid and serves as template for transcription and replication. The nucleocapsid is helical with a pitch of 10.81 NP per turn and a diameter of about 22nm. Each NP binds to six nucleotides of viral genomic RNA, three being exposed to the solvant and three hidden into the nucleocapsid. Also recruits host PPP2R5C phosphatase to dephosphorylate VP30 and thereby promote viral transcription. Upon virion assembly and budding, NP binds to VP24 and possibly host STAU1. The polypeptide is Nucleoprotein (NP) (Sudan ebolavirus (strain Human/Uganda/Gulu/2000) (SEBOV)).